Here is a 77-residue protein sequence, read N- to C-terminus: Liver-expressed antimicrobial peptide 2 (77 aa).

Residues 1–22 (MWHLKLCAVLMIFLLLLGQTDG) form the signal peptide. Positions 23–37 (SPIPEVSSAKRRPRR) are excised as a propeptide. Intrachain disulfides connect Cys54/Cys65 and Cys60/Cys70.

The protein belongs to the LEAP2 family.

It is found in the secreted. Its function is as follows. Has an antimicrobial activity. The polypeptide is Liver-expressed antimicrobial peptide 2 (LEAP2) (Macaca mulatta (Rhesus macaque)).